We begin with the raw amino-acid sequence, 833 residues long: DNA helicase MCM8 (833 aa).

The 208-residue stretch at 395-602 (LLKLVVNSLC…QHDHLLSEHV (208 aa)) folds into the MCM domain. 447 to 454 (GDPGLGKS) provides a ligand contact to ATP. Ser-623 carries the post-translational modification Phosphoserine.

The protein belongs to the MCM family. In terms of assembly, component of the MCM8-MCM9 complex, which forms a hexamer composed of MCM8 and MCM9. Interacts with the DNA mismatch repair (MMR) complex composed at least of MSH2, MSH3, MSH6, PMS1 and MLH1. Interacts with RAD51; the interaction recruits RAD51 to DNA damage sites. Interacts with the MRN complex composed of MRE11, RAD50 and NBN/NBS1. Interacts with CDC6 and ORC2. Interacts with HROB; the interaction recruits the MCM8-MCM9 complex to DNA damage sites.

The protein localises to the nucleus. It is found in the chromosome. The catalysed reaction is ATP + H2O = ADP + phosphate + H(+). In terms of biological role, component of the MCM8-MCM9 complex, a complex involved in the repair of double-stranded DNA breaks (DBSs) and DNA interstrand cross-links (ICLs) by homologous recombination (HR). Required for DNA resection by the MRE11-RAD50-NBN/NBS1 (MRN) complex by recruiting the MRN complex to the repair site and by promoting the complex nuclease activity. Probably by regulating the localization of the MNR complex, indirectly regulates the recruitment of downstream effector RAD51 to DNA damage sites including DBSs and ICLs. The MCM8-MCM9 complex is dispensable for DNA replication and S phase progression. However, may play a non-essential for DNA replication: may be involved in the activation of the prereplicative complex (pre-RC) during G(1) phase by recruiting CDC6 to the origin recognition complex (ORC). Probably by regulating HR, plays a key role during gametogenesis. Stabilizes MCM9 protein. The polypeptide is DNA helicase MCM8 (Mcm8) (Mus musculus (Mouse)).